A 671-amino-acid polypeptide reads, in one-letter code: DNA ligase (671 aa).

NAD(+) contacts are provided by residues 34–38, 83–84, and E115; these read DAEYD and SL. K117 functions as the N6-AMP-lysine intermediate in the catalytic mechanism. Residues R138, E174, K291, and K315 each coordinate NAD(+). Residues C409, C412, C427, and C432 each contribute to the Zn(2+) site. The BRCT domain maps to 589–671; that stretch reads RSGGPLTGKS…LQMIDTLEEA (83 aa).

It belongs to the NAD-dependent DNA ligase family. LigA subfamily. It depends on Mg(2+) as a cofactor. The cofactor is Mn(2+).

The enzyme catalyses NAD(+) + (deoxyribonucleotide)n-3'-hydroxyl + 5'-phospho-(deoxyribonucleotide)m = (deoxyribonucleotide)n+m + AMP + beta-nicotinamide D-nucleotide.. Functionally, DNA ligase that catalyzes the formation of phosphodiester linkages between 5'-phosphoryl and 3'-hydroxyl groups in double-stranded DNA using NAD as a coenzyme and as the energy source for the reaction. It is essential for DNA replication and repair of damaged DNA. This is DNA ligase from Syntrophotalea carbinolica (strain DSM 2380 / NBRC 103641 / GraBd1) (Pelobacter carbinolicus).